We begin with the raw amino-acid sequence, 539 residues long: Phosphoenolpyruvate carboxykinase (ATP) (539 aa).

3 residues coordinate substrate: Arg64, Tyr206, and Lys212. ATP is bound by residues Lys212, His231, and 247 to 255 (GLSGTGKTT). 2 residues coordinate Mn(2+): Lys212 and His231. Asp268 provides a ligand contact to Mn(2+). ATP contacts are provided by residues Glu296, Arg332, 448–449 (RI), and Thr454. Arg332 contributes to the substrate binding site.

It belongs to the phosphoenolpyruvate carboxykinase (ATP) family. As to quaternary structure, monomer. Requires Mn(2+) as cofactor.

It is found in the cytoplasm. It catalyses the reaction oxaloacetate + ATP = phosphoenolpyruvate + ADP + CO2. It participates in carbohydrate biosynthesis; gluconeogenesis. Involved in the gluconeogenesis. Catalyzes the conversion of oxaloacetate (OAA) to phosphoenolpyruvate (PEP) through direct phosphoryl transfer between the nucleoside triphosphate and OAA. This is Phosphoenolpyruvate carboxykinase (ATP) from Salmonella agona (strain SL483).